The chain runs to 448 residues: Phosphoglucosamine mutase (448 aa).

Catalysis depends on serine 102, which acts as the Phosphoserine intermediate. Mg(2+)-binding residues include serine 102, aspartate 241, aspartate 243, and aspartate 245. At serine 102 the chain carries Phosphoserine.

Belongs to the phosphohexose mutase family. Mg(2+) is required as a cofactor. Post-translationally, activated by phosphorylation.

The catalysed reaction is alpha-D-glucosamine 1-phosphate = D-glucosamine 6-phosphate. Functionally, catalyzes the conversion of glucosamine-6-phosphate to glucosamine-1-phosphate. This Ruegeria pomeroyi (strain ATCC 700808 / DSM 15171 / DSS-3) (Silicibacter pomeroyi) protein is Phosphoglucosamine mutase.